The primary structure comprises 460 residues: Cysteine--tRNA ligase (460 aa).

Residue cysteine 28 coordinates Zn(2+). Residues 30-40 (MTVYDYCHLGH) carry the 'HIGH' region motif. Zn(2+)-binding residues include cysteine 209, histidine 234, and glutamate 238. Residues 266–270 (KMSKS) carry the 'KMSKS' region motif. Residue lysine 269 participates in ATP binding.

Belongs to the class-I aminoacyl-tRNA synthetase family. In terms of assembly, monomer. Requires Zn(2+) as cofactor.

Its subcellular location is the cytoplasm. It catalyses the reaction tRNA(Cys) + L-cysteine + ATP = L-cysteinyl-tRNA(Cys) + AMP + diphosphate. The polypeptide is Cysteine--tRNA ligase (Pseudomonas entomophila (strain L48)).